A 332-amino-acid chain; its full sequence is tRNA U34 carboxymethyltransferase (332 aa).

Carboxy-S-adenosyl-L-methionine-binding positions include K96, W110, K115, G135, 157-159 (DPT), 190-191 (IE), M205, Y209, and R324.

The protein belongs to the class I-like SAM-binding methyltransferase superfamily. CmoB family. Homotetramer.

It catalyses the reaction carboxy-S-adenosyl-L-methionine + 5-hydroxyuridine(34) in tRNA = 5-carboxymethoxyuridine(34) in tRNA + S-adenosyl-L-homocysteine + H(+). Catalyzes carboxymethyl transfer from carboxy-S-adenosyl-L-methionine (Cx-SAM) to 5-hydroxyuridine (ho5U) to form 5-carboxymethoxyuridine (cmo5U) at position 34 in tRNAs. The polypeptide is tRNA U34 carboxymethyltransferase (Alteromonas mediterranea (strain DSM 17117 / CIP 110805 / LMG 28347 / Deep ecotype)).